Consider the following 350-residue polypeptide: Beta-hexosaminidase (350 aa).

Substrate-binding positions include aspartate 62, arginine 70, arginine 133, and 163–164; that span reads KH. Catalysis depends on histidine 176, which acts as the Proton donor/acceptor. The active-site Nucleophile is aspartate 248.

It belongs to the glycosyl hydrolase 3 family. NagZ subfamily.

Its subcellular location is the cytoplasm. The enzyme catalyses Hydrolysis of terminal non-reducing N-acetyl-D-hexosamine residues in N-acetyl-beta-D-hexosaminides.. Its pathway is cell wall biogenesis; peptidoglycan recycling. Functionally, plays a role in peptidoglycan recycling by cleaving the terminal beta-1,4-linked N-acetylglucosamine (GlcNAc) from peptide-linked peptidoglycan fragments, giving rise to free GlcNAc, anhydro-N-acetylmuramic acid and anhydro-N-acetylmuramic acid-linked peptides. The polypeptide is Beta-hexosaminidase (Haemophilus influenzae (strain PittEE)).